Consider the following 228-residue polypeptide: Mediator of RNA polymerase II transcription subunit 7-A (228 aa).

The protein belongs to the Mediator complex subunit 7 family. As to quaternary structure, component of the Mediator complex.

The protein resides in the nucleus. In terms of biological role, component of the Mediator complex, a coactivator involved in the regulated transcription of nearly all RNA polymerase II-dependent genes. Mediator functions as a bridge to convey information from gene-specific regulatory proteins to the basal RNA polymerase II transcription machinery. Mediator is recruited to promoters by direct interactions with regulatory proteins and serves as a scaffold for the assembly of a functional preinitiation complex with RNA polymerase II and the general transcription factors. The polypeptide is Mediator of RNA polymerase II transcription subunit 7-A (med7-a) (Xenopus laevis (African clawed frog)).